A 143-amino-acid chain; its full sequence is Transcriptional regulator MraZ (143 aa).

SpoVT-AbrB domains lie at 5–47 (EYQH…PMHE) and 76–119 (ATEC…SKVI).

This sequence belongs to the MraZ family. As to quaternary structure, forms oligomers.

The protein resides in the cytoplasm. Its subcellular location is the nucleoid. The sequence is that of Transcriptional regulator MraZ from Bacillus subtilis (strain 168).